Reading from the N-terminus, the 78-residue chain is Probable Vpr-like protein (78 aa).

The Nuclear export signal motif lies at 35-43; it reads AIRLLQGLF. The Nuclear localization signal motif lies at 45-54; it reads RYRFKKPRVD.

Its subcellular location is the virion. The protein resides in the host nucleus. Functionally, seems to function as a Vpr-like protein, since it mediates host cell cycle arrest in G2 phase. Cell cycle arrest creates a favorable environment for maximizing viral expression and production. This Feline immunodeficiency virus (isolate Petaluma) (FIV) protein is Probable Vpr-like protein.